The sequence spans 247 residues: 14-3-3 protein gamma (247 aa).

Residue Met-1 is modified to N-acetylmethionine; in 14-3-3 protein gamma; alternate; partial. An N-acetylvaline; in 14-3-3 protein gamma, N-terminally processed; partial modification is found at Val-2. Residue Val-2 is modified to N-acetylvaline; partial. A required for interaction with SPATA18/MIEAP (isoform 2) but dispensable for binding to SPATA18/MIEAP (isoform 1) region spans residues 2 to 166 (VDREQLVQKA…AHEISKEHMQ (165 aa)). Residues 2–247 (VDREQLVQKA…QDDDGGEGNN (246 aa)) form an interaction with SPATA18/MIEAP region. A Phosphoserine modification is found at Ser-71. Tyr-133 is modified (phosphotyrosine). A Phosphothreonine modification is found at Thr-145. Residue Ser-215 is modified to Phosphoserine. Thr-234 is subject to Phosphothreonine. Phosphoserine is present on Ser-235.

It belongs to the 14-3-3 family. In terms of assembly, homodimer. Part of a complex that contains DSG3, PKP1, YAP1 and YWHAG; the complex is required for localization of DSG3 and YAP1 to the cell membrane in keratinocytes. Interacts with SAMSN1. Interacts with RAF1, SSH1 and CRTC2/TORC2. Interacts with ABL1 (phosphorylated form); the interaction retains it in the cytoplasm. Interacts with GAB2. Interacts with MDM4 (phosphorylated); negatively regulates MDM4 activity toward TP53. Interacts with PKA-phosphorylated AANAT and SIRT2. Interacts with the 'Thr-369' phosphorylated form of DAPK2. Interacts with PI4KB, TBC1D22A and TBC1D22B. Interacts with SLITRK1. Interacts with LRRK2; this interaction is dependent on LRRK2 phosphorylation. Interacts with MARK2 and MARK3. Interacts with MEFV. Interacts with ENDOG, TSC2 and PIK3C3; interaction with ENDOG weakens its interaction with TSC2 and PIK3C3. Interacts with (phosphorylated) WDR24. Interacts with BEST1; this interaction promotes L-glutamate channel activity leading to the positive regulation of NMDA glutamate receptor activity through the L-glutamate secretion. Interacts with PKP1 (when phosphorylated); the interaction results in translocation of PKP1 to the cytoplasm and loss of intercellular adhesion in keratinocytes. Interacts with SPATA18/MIEAP (isoforms 1 and 2); a protein that also plays a role in MALM. Phosphorylated by various PKC isozymes. In terms of tissue distribution, highly expressed in brain, skeletal muscle, and heart.

The protein localises to the cytoplasm. Its subcellular location is the cytosol. The protein resides in the mitochondrion matrix. In terms of biological role, adapter protein implicated in the regulation of a large spectrum of both general and specialized signaling pathways. Binds to a large number of partners, usually by recognition of a phosphoserine or phosphothreonine motif. Binding generally results in the modulation of the activity of the binding partner. Promotes inactivation of WDR24 component of the GATOR2 complex by binding to phosphorylated WDR24. Participates in the positive regulation of NMDA glutamate receptor activity by promoting the L-glutamate secretion through interaction with BEST1. Reduces keratinocyte intercellular adhesion, via interacting with PKP1 and sequestering it in the cytoplasm, thereby reducing its incorporation into desmosomes. Plays a role in mitochondrial protein catabolic process (also named MALM) that promotes the degradation of damaged proteins inside mitochondria. This chain is 14-3-3 protein gamma, found in Homo sapiens (Human).